A 170-amino-acid chain; its full sequence is Envelope protein 166 (170 aa).

Residue M1 is a topological domain, intravirion. A helical transmembrane segment spans residues 2-22; sequence FYPVVQVLIGIILVIILILGF. The Virion surface portion of the chain corresponds to 23 to 170; that stretch reads YHMKHKPPKK…TVMGIARNVL (148 aa).

Belongs to the asfivirus envelope protein p22 family.

Its subcellular location is the virion membrane. The protein localises to the host cell membrane. The sequence is that of Envelope protein 166 from Ornithodoros (relapsing fever ticks).